Reading from the N-terminus, the 752-residue chain is Zinc finger protein 184 (752 aa).

The 72-residue stretch at 28 to 99 (VTFKDVIVDF…EPSIPVGTPG (72 aa)) folds into the KRAB domain. A phosphoserine mark is found at Ser117, Ser122, and Ser200. Residue Lys207 forms a Glycyl lysine isopeptide (Lys-Gly) (interchain with G-Cter in SUMO2) linkage. 19 consecutive C2H2-type zinc fingers follow at residues 223-245 (CKCN…QRTH), 251-273 (YKCN…QRIH), 279-301 (YKCD…QRIH), 307-329 (YKCD…QRIH), 335-357 (YTCN…QKIH), 363-385 (FKCD…QKIH), 391-413 (YKCN…HMIH), 419-441 (YECN…QKTH), 447-469 (YDCA…LKIH), 475-497 (YKCN…RRIH), 503-525 (FECS…QKTH), 531-553 (YECK…ERIH), 559-581 (YQCH…RKIH), 587-609 (YKCN…KRIH), 615-637 (YECA…QKTH), 643-665 (YHCN…QRIH), 671-693 (YKCN…QNTH), 699-721 (YNCN…QRIH), and 727-749 (FGCN…QRLH).

This sequence belongs to the krueppel C2H2-type zinc-finger protein family.

Its subcellular location is the nucleus. Its function is as follows. May be involved in transcriptional regulation. This chain is Zinc finger protein 184 (ZNF184), found in Bos taurus (Bovine).